A 320-amino-acid polypeptide reads, in one-letter code: Cytochrome f (320 aa).

An N-terminal signal peptide occupies residues 1 to 35; sequence MQTRKTFSWIKEQIARSISVSLLIYIITRTSISSA. Residues tyrosine 36, cysteine 56, cysteine 59, and histidine 60 each contribute to the heme site. A helical membrane pass occupies residues 286-306; that stretch reads VQGLLFFLASVILAQIFLVLK.

This sequence belongs to the cytochrome f family. As to quaternary structure, the 4 large subunits of the cytochrome b6-f complex are cytochrome b6, subunit IV (17 kDa polypeptide, petD), cytochrome f and the Rieske protein, while the 4 small subunits are PetG, PetL, PetM and PetN. The complex functions as a dimer. Requires heme as cofactor.

It is found in the plastid. Its subcellular location is the chloroplast thylakoid membrane. Component of the cytochrome b6-f complex, which mediates electron transfer between photosystem II (PSII) and photosystem I (PSI), cyclic electron flow around PSI, and state transitions. The chain is Cytochrome f from Jasminum nudiflorum (Winter jasmine).